The following is a 158-amino-acid chain: Cyclic pyranopterin monophosphate synthase (158 aa).

Residues Leu-75–His-77 and Met-113–Glu-114 each bind substrate. Asp-128 is an active-site residue.

It belongs to the MoaC family. In terms of assembly, homohexamer; trimer of dimers.

It catalyses the reaction (8S)-3',8-cyclo-7,8-dihydroguanosine 5'-triphosphate = cyclic pyranopterin phosphate + diphosphate. Its pathway is cofactor biosynthesis; molybdopterin biosynthesis. In terms of biological role, catalyzes the conversion of (8S)-3',8-cyclo-7,8-dihydroguanosine 5'-triphosphate to cyclic pyranopterin monophosphate (cPMP). The protein is Cyclic pyranopterin monophosphate synthase of Acidiphilium cryptum (strain JF-5).